The following is a 289-amino-acid chain: Shikimate dehydrogenase (NADP(+)) (289 aa).

Residues S22–S24 and T69 each bind shikimate. K73 acts as the Proton acceptor in catalysis. An NADP(+)-binding site is contributed by E85. Shikimate contacts are provided by N94 and D109. Residues G134–A138, N158–R163, and I226 each bind NADP(+). Y228 contributes to the shikimate binding site. Residue G249 coordinates NADP(+).

It belongs to the shikimate dehydrogenase family. In terms of assembly, homodimer.

The enzyme catalyses shikimate + NADP(+) = 3-dehydroshikimate + NADPH + H(+). It functions in the pathway metabolic intermediate biosynthesis; chorismate biosynthesis; chorismate from D-erythrose 4-phosphate and phosphoenolpyruvate: step 4/7. Functionally, involved in the biosynthesis of the chorismate, which leads to the biosynthesis of aromatic amino acids. Catalyzes the reversible NADPH linked reduction of 3-dehydroshikimate (DHSA) to yield shikimate (SA). This is Shikimate dehydrogenase (NADP(+)) from Brucella ovis (strain ATCC 25840 / 63/290 / NCTC 10512).